A 340-amino-acid polypeptide reads, in one-letter code: N-acetyl-gamma-glutamyl-phosphate reductase (340 aa).

The active site involves Cys-149.

This sequence belongs to the NAGSA dehydrogenase family. Type 1 subfamily.

The protein resides in the cytoplasm. The catalysed reaction is N-acetyl-L-glutamate 5-semialdehyde + phosphate + NADP(+) = N-acetyl-L-glutamyl 5-phosphate + NADPH + H(+). Its pathway is amino-acid biosynthesis; L-arginine biosynthesis; N(2)-acetyl-L-ornithine from L-glutamate: step 3/4. Catalyzes the NADPH-dependent reduction of N-acetyl-5-glutamyl phosphate to yield N-acetyl-L-glutamate 5-semialdehyde. In Vesicomyosocius okutanii subsp. Calyptogena okutanii (strain HA), this protein is N-acetyl-gamma-glutamyl-phosphate reductase.